We begin with the raw amino-acid sequence, 686 residues long: MADSGNPNENNPSTDTGVNDAVSTSHGDASASYDASAITVLEGLDAVRKRPGMYIGSTGERGLHHLVQEVVDNSVDEALAGHADTIDVTILPDGGVRVVDNGRGIPVGIVPSEGKPAVEVVLTVLHAGGKFGGGGYAVSGGLHGVGVSVVNALSTRVAVEVKTDGYRWTQEYKLGVPTASLARHEATEETGTTVTFWADGDIFETTDYSFETLSRRFQEMAFLNKGLKINLTDERESAKATAGADEAGEDEKHEVKSVSYHYEGGIVDFVTYLNSRKGELVHPTVIDLEAEDKDKSLSLEVAMQWNGGYTEGVYSFANIIHTHEGGTHEEGFRAALTSLINKYARDKKLLREKDDNLTGDDIREGLTAIISVKLAEPQFEGQTKTKLGNTEVKTFVQKVVYEHLTDWLDRNPNEAADIIRKGIQAAHARVAARKARDLTRRKGLLESASLPGKLSDCQSNDPTKCEIFIVEGDSAGGSAKSGRNPQYQAILPIRGKILNVEKARIDRILQNQEIQAMISAFGTGVHEDFDIEKLRYHKIILMADADVDGQHINTLLLTFLFRFMRPLVESGHVYLSRPPLYKIKWGRDDFEYAYSDRERDALIEMGRQAGKRIREDSVQRFKGLGEMNAEELRITTMDQEHRVLGQVTLDDAAQADDLFSVLMGEDVEARRAFIQRNAKDVRFLDI.

Positions methionine 1–glycine 27 are enriched in polar residues. The interval methionine 1–alanine 29 is disordered. Positions cysteine 465–proline 579 constitute a Toprim domain. Residues glutamate 471, aspartate 544, and aspartate 546 each coordinate Mg(2+).

It belongs to the type II topoisomerase GyrB family. In terms of assembly, heterotetramer, composed of two GyrA and two GyrB chains. In the heterotetramer, GyrA contains the active site tyrosine that forms a transient covalent intermediate with DNA, while GyrB binds cofactors and catalyzes ATP hydrolysis. Mg(2+) serves as cofactor. Requires Mn(2+) as cofactor. It depends on Ca(2+) as a cofactor.

It localises to the cytoplasm. It catalyses the reaction ATP-dependent breakage, passage and rejoining of double-stranded DNA.. In terms of biological role, a type II topoisomerase that negatively supercoils closed circular double-stranded (ds) DNA in an ATP-dependent manner to modulate DNA topology and maintain chromosomes in an underwound state. Negative supercoiling favors strand separation, and DNA replication, transcription, recombination and repair, all of which involve strand separation. Also able to catalyze the interconversion of other topological isomers of dsDNA rings, including catenanes and knotted rings. Type II topoisomerases break and join 2 DNA strands simultaneously in an ATP-dependent manner. In Streptomyces coelicolor (strain ATCC BAA-471 / A3(2) / M145), this protein is DNA gyrase subunit B.